A 931-amino-acid chain; its full sequence is Bifunctional glutamine synthetase adenylyltransferase/adenylyl-removing enzyme (931 aa).

The tract at residues 1–434 (MTLAPADLPA…STEFAALLAP (434 aa)) is adenylyl removase. The adenylyl transferase stretch occupies residues 441 to 931 (PDALANYWRS…ACIAAELPFA (491 aa)).

It belongs to the GlnE family. Mg(2+) serves as cofactor.

The catalysed reaction is [glutamine synthetase]-O(4)-(5'-adenylyl)-L-tyrosine + phosphate = [glutamine synthetase]-L-tyrosine + ADP. The enzyme catalyses [glutamine synthetase]-L-tyrosine + ATP = [glutamine synthetase]-O(4)-(5'-adenylyl)-L-tyrosine + diphosphate. In terms of biological role, involved in the regulation of glutamine synthetase GlnA, a key enzyme in the process to assimilate ammonia. When cellular nitrogen levels are high, the C-terminal adenylyl transferase (AT) inactivates GlnA by covalent transfer of an adenylyl group from ATP to specific tyrosine residue of GlnA, thus reducing its activity. Conversely, when nitrogen levels are low, the N-terminal adenylyl removase (AR) activates GlnA by removing the adenylyl group by phosphorolysis, increasing its activity. The regulatory region of GlnE binds the signal transduction protein PII (GlnB) which indicates the nitrogen status of the cell. This chain is Bifunctional glutamine synthetase adenylyltransferase/adenylyl-removing enzyme, found in Stenotrophomonas maltophilia (strain R551-3).